A 251-amino-acid polypeptide reads, in one-letter code: Triosephosphate isomerase (251 aa).

9 to 11 serves as a coordination point for substrate; sequence NWK. The Electrophile role is filled by histidine 95. The active-site Proton acceptor is the glutamate 167. Substrate is bound by residues glycine 173, serine 212, and 233–234; that span reads GG.

This sequence belongs to the triosephosphate isomerase family. As to quaternary structure, homodimer.

Its subcellular location is the cytoplasm. The catalysed reaction is D-glyceraldehyde 3-phosphate = dihydroxyacetone phosphate. It functions in the pathway carbohydrate biosynthesis; gluconeogenesis. It participates in carbohydrate degradation; glycolysis; D-glyceraldehyde 3-phosphate from glycerone phosphate: step 1/1. In terms of biological role, involved in the gluconeogenesis. Catalyzes stereospecifically the conversion of dihydroxyacetone phosphate (DHAP) to D-glyceraldehyde-3-phosphate (G3P). In Pseudomonas aeruginosa (strain LESB58), this protein is Triosephosphate isomerase.